The sequence spans 236 residues: Phosphoribosylformylglycinamidine synthase subunit PurQ (236 aa).

The 233-residue stretch at 2 to 234 (RFAVVTFPGS…LSVGLEVAHS (233 aa)) folds into the Glutamine amidotransferase type-1 domain. The active-site Nucleophile is the Cys-86. Active-site residues include His-203 and Glu-205.

Part of the FGAM synthase complex composed of 1 PurL, 1 PurQ and 2 PurS subunits.

It localises to the cytoplasm. It catalyses the reaction N(2)-formyl-N(1)-(5-phospho-beta-D-ribosyl)glycinamide + L-glutamine + ATP + H2O = 2-formamido-N(1)-(5-O-phospho-beta-D-ribosyl)acetamidine + L-glutamate + ADP + phosphate + H(+). The catalysed reaction is L-glutamine + H2O = L-glutamate + NH4(+). It participates in purine metabolism; IMP biosynthesis via de novo pathway; 5-amino-1-(5-phospho-D-ribosyl)imidazole from N(2)-formyl-N(1)-(5-phospho-D-ribosyl)glycinamide: step 1/2. Its function is as follows. Part of the phosphoribosylformylglycinamidine synthase complex involved in the purines biosynthetic pathway. Catalyzes the ATP-dependent conversion of formylglycinamide ribonucleotide (FGAR) and glutamine to yield formylglycinamidine ribonucleotide (FGAM) and glutamate. The FGAM synthase complex is composed of three subunits. PurQ produces an ammonia molecule by converting glutamine to glutamate. PurL transfers the ammonia molecule to FGAR to form FGAM in an ATP-dependent manner. PurS interacts with PurQ and PurL and is thought to assist in the transfer of the ammonia molecule from PurQ to PurL. This Thermomicrobium roseum (strain ATCC 27502 / DSM 5159 / P-2) protein is Phosphoribosylformylglycinamidine synthase subunit PurQ.